The primary structure comprises 642 residues: tRNA uridine 5-carboxymethylaminomethyl modification enzyme MnmG (642 aa).

24-29 (GGGHAG) contributes to the FAD binding site. Position 284–298 (284–298 (GPRYCPSIEDKIHRF)) interacts with NAD(+).

The protein belongs to the MnmG family. As to quaternary structure, homodimer. Heterotetramer of two MnmE and two MnmG subunits. FAD serves as cofactor.

Its subcellular location is the cytoplasm. NAD-binding protein involved in the addition of a carboxymethylaminomethyl (cmnm) group at the wobble position (U34) of certain tRNAs, forming tRNA-cmnm(5)s(2)U34. This chain is tRNA uridine 5-carboxymethylaminomethyl modification enzyme MnmG, found in Psychrobacter sp. (strain PRwf-1).